Reading from the N-terminus, the 897-residue chain is Alanine--tRNA ligase (897 aa).

Zn(2+) is bound by residues His-581, His-585, Cys-684, and His-688.

It belongs to the class-II aminoacyl-tRNA synthetase family. Zn(2+) serves as cofactor.

It is found in the cytoplasm. The enzyme catalyses tRNA(Ala) + L-alanine + ATP = L-alanyl-tRNA(Ala) + AMP + diphosphate. In terms of biological role, catalyzes the attachment of alanine to tRNA(Ala) in a two-step reaction: alanine is first activated by ATP to form Ala-AMP and then transferred to the acceptor end of tRNA(Ala). Also edits incorrectly charged Ser-tRNA(Ala) and Gly-tRNA(Ala) via its editing domain. This Mycobacterium sp. (strain KMS) protein is Alanine--tRNA ligase.